Here is a 123-residue protein sequence, read N- to C-terminus: Large ribosomal subunit protein uL14 (123 aa).

This sequence belongs to the universal ribosomal protein uL14 family. As to quaternary structure, part of the 50S ribosomal subunit. Forms a cluster with proteins L3 and L19. In the 70S ribosome, L14 and L19 interact and together make contacts with the 16S rRNA in bridges B5 and B8.

In terms of biological role, binds to 23S rRNA. Forms part of two intersubunit bridges in the 70S ribosome. The polypeptide is Large ribosomal subunit protein uL14 (Aliivibrio fischeri (strain ATCC 700601 / ES114) (Vibrio fischeri)).